The primary structure comprises 320 residues: Putative movement protein (320 aa).

Catalysis depends on residues histidine 144, aspartate 171, and serine 199. Residues 251 to 320 (RRSRSISAKR…GKGNSDGSSP (70 aa)) are disordered. Basic and acidic residues predominate over residues 278–289 (RIERFGKDEFGR).

This sequence belongs to the tobamoviruses movement protein family.

In terms of biological role, may play a role in viral cell to cell movement by increasing the size exclusion limit of plasmodesmata and forming a complex with viral RNA to assist its movement. May also have a papain-like protease activity and cleave the genome polyprotein. The chain is Putative movement protein from Malus sylvestris (European crab apple).